The following is a 309-amino-acid chain: ADP-L-glycero-D-manno-heptose-6-epimerase (309 aa).

NADP(+) is bound by residues 10–11, 31–32, K38, K53, 75–79, and N92; these read LI, DN, and QGACS. Y139 functions as the Proton acceptor in the catalytic mechanism. K143 contributes to the NADP(+) binding site. Substrate is bound at residue N168. NADP(+)-binding residues include V169 and K177. The Proton acceptor role is filled by K177. Substrate is bound by residues S179, H186, 200–203, R208, and Y271; that span reads FAGS.

The protein belongs to the NAD(P)-dependent epimerase/dehydratase family. HldD subfamily. Homopentamer. The cofactor is NADP(+).

The enzyme catalyses ADP-D-glycero-beta-D-manno-heptose = ADP-L-glycero-beta-D-manno-heptose. The protein operates within nucleotide-sugar biosynthesis; ADP-L-glycero-beta-D-manno-heptose biosynthesis; ADP-L-glycero-beta-D-manno-heptose from D-glycero-beta-D-manno-heptose 7-phosphate: step 4/4. Its function is as follows. Catalyzes the interconversion between ADP-D-glycero-beta-D-manno-heptose and ADP-L-glycero-beta-D-manno-heptose via an epimerization at carbon 6 of the heptose. The polypeptide is ADP-L-glycero-D-manno-heptose-6-epimerase (Histophilus somni (strain 2336) (Haemophilus somnus)).